A 647-amino-acid polypeptide reads, in one-letter code: Chaperone protein DnaK (647 aa).

Thr198 is subject to Phosphothreonine; by autocatalysis. A disordered region spans residues 606–634 (GASAEGMDPNQFQQGADNAGESNQADDDV). Polar residues predominate over residues 615 to 628 (NQFQQGADNAGESN).

The protein belongs to the heat shock protein 70 family.

Acts as a chaperone. The polypeptide is Chaperone protein DnaK (Psychrobacter cryohalolentis (strain ATCC BAA-1226 / DSM 17306 / VKM B-2378 / K5)).